The sequence spans 601 residues: Group B oligopeptidase PepB (601 aa).

H386 serves as a coordination point for Zn(2+). The active site involves E387. The Zn(2+) site is built by H390 and H393.

The protein belongs to the peptidase M3B family. Requires Zn(2+) as cofactor.

It localises to the cytoplasm. Functionally, has oligopeptidase activity and degrades a variety of small bioactive peptides, including bradykinin, neurotensin, and peptide fragments of substance P and adrenocorticotropin. Also hydrolyzes the synthetic collagen-like substrate N-(3-[2-furyl]acryloyl)-Leu-Gly-Pro-Ala (FALGPA). This is Group B oligopeptidase PepB (pepB) from Streptococcus agalactiae serotype III (strain NEM316).